The primary structure comprises 518 residues: Filamentous growth regulator 15 (518 aa).

Polar residues predominate over residues 1–41 (MESTLSVSDEKLTNSSTALNNCGDNKESSQVLTTANTTTDN). Disordered stretches follow at residues 1–63 (MEST…SKER), 75–101 (VDPNQQSKNTVSDSVQDTTGVPSDHGK), and 261–307 (KSRS…KQHR). Over residues 42-52 (QQVQPKSQHQQ) the composition is skewed to low complexity. Positions 77–95 (PNQQSKNTVSDSVQDTTGV) are enriched in polar residues. Basic residues predominate over residues 262 to 274 (SRSRSKVTKKRKV). A compositionally biased stretch (low complexity) spans 283–298 (SNTATATTSVTTPDAN). The C2H2-type zinc finger occupies 374 to 406 (HECQLPSAEEPHKLCLRRFSRKYELIRHQETVH). Positions 492 to 518 (RKSSGDDTNYMETSDLESGEEEVTFNK) are disordered. Over residues 505–518 (SDLESGEEEVTFNK) the composition is skewed to acidic residues.

Its subcellular location is the nucleus. Probable transcription factor involved in the regulation of filamentous growth. In Candida albicans (strain SC5314 / ATCC MYA-2876) (Yeast), this protein is Filamentous growth regulator 15 (FGR15).